The sequence spans 310 residues: MKKTLKRILFSSLSLSILLLLTGCVSVDKAGKPYGVIWNTLGVPMANLITYFAQHQGLGFGVAIIIVTIIVRVIILPLGLYQSWKASYQAEKMAYFKPLFEPINERLRNAKTQEEKLAAQTELMTAQRENGLSMFGGIGCLPLLIQMPFFSAIFFAARYTPGVSSATFLGLNLGQKSLTLTVIIAILYFVQSWLSMQGVPDEQRQQMKTMMYVMPIAMVFMSISLPASVALYWFIGGIFSIIQQLVTTYVLKPKLRRKVEEEYTKNPPKAYKSNNARKDVTSSTKTTESNQAIITSKKTNRNAGKQKRRG.

An N-terminal signal peptide occupies residues 1–23; that stretch reads MKKTLKRILFSSLSLSILLLLTG. Cysteine 24 carries N-palmitoyl cysteine lipidation. Cysteine 24 carries S-diacylglycerol cysteine lipidation. Transmembrane regions (helical) follow at residues 33–53, 58–78, 135–155, 180–200, and 219–239; these read PYGV…TYFA, LGFG…ILPL, FGGI…AIFF, LTVI…QGVP, and VFMS…GGIF. Residues 262–310 are disordered; it reads EYTKNPPKAYKSNNARKDVTSSTKTTESNQAIITSKKTNRNAGKQKRRG. Over residues 281–297 the composition is skewed to polar residues; it reads TSSTKTTESNQAIITSK. Positions 298–310 are enriched in basic residues; it reads KTNRNAGKQKRRG.

It belongs to the OXA1/ALB3/YidC family. Type 2 subfamily.

It localises to the cell membrane. In terms of biological role, required for the insertion and/or proper folding and/or complex formation of integral membrane proteins into the membrane. Involved in integration of membrane proteins that insert both dependently and independently of the Sec translocase complex, as well as at least some lipoproteins. The sequence is that of Membrane protein insertase YidC 2 from Streptococcus agalactiae serotype III (strain NEM316).